The chain runs to 86 residues: MGRKDSSTTKLPVDQYRKQIGKQDYKKTKPILRATKLKAEAKKTAIGIKEVGLMLAAILALLLAFYAFFYLRLSTNIDADLDPDED.

Residues 51-71 (VGLMLAAILALLLAFYAFFYL) form a helical membrane-spanning segment.

It belongs to the TRIQK family.

It localises to the endoplasmic reticulum membrane. May play a role in cell growth and maintenance of cell morphology. This Rattus norvegicus (Rat) protein is Triple QxxK/R motif-containing protein (Triqk).